A 301-amino-acid polypeptide reads, in one-letter code: MAPSNLPESTTPAEVPAPYGTGPAAAAQAASAAGRKPISRVRIHHLQQAKDNGEHFAMLTAYEQYTAEIFDQAGIEVLLVGDSASNNVYGNETSLPVTVDELLPLTRAVSRSAKRALIVADLPFGSYEVSPGQAVATGVRFLKEGLAHAVKIEGTAYYADTVRAMVQAGIPVMAHIGFTPQSEHSLGGYRVQGRGDDAQRLVDDAVALQDAGAFSVLMEMVPAETAAAVDAALRVPTVGIGAGKTTTGQVLVWQDMAGLRGGKMAKFVKQYADLRTTLSDAAAAYGEDVRSGQFPGPEHSF.

The span at 1–12 (MAPSNLPESTTP) shows a compositional bias: polar residues. The disordered stretch occupies residues 1–24 (MAPSNLPESTTPAEVPAPYGTGPA). Mg(2+) contacts are provided by Asp82 and Asp121. 3-methyl-2-oxobutanoate is bound by residues 82–83 (DS), Asp121, and Lys151. Glu153 is a Mg(2+) binding site. The active-site Proton acceptor is Glu219.

This sequence belongs to the PanB family. In terms of assembly, homodecamer; pentamer of dimers. Requires Mg(2+) as cofactor.

Its subcellular location is the cytoplasm. The catalysed reaction is 3-methyl-2-oxobutanoate + (6R)-5,10-methylene-5,6,7,8-tetrahydrofolate + H2O = 2-dehydropantoate + (6S)-5,6,7,8-tetrahydrofolate. The protein operates within cofactor biosynthesis; (R)-pantothenate biosynthesis; (R)-pantoate from 3-methyl-2-oxobutanoate: step 1/2. Its function is as follows. Catalyzes the reversible reaction in which hydroxymethyl group from 5,10-methylenetetrahydrofolate is transferred onto alpha-ketoisovalerate to form ketopantoate. In Paenarthrobacter aurescens (strain TC1), this protein is 3-methyl-2-oxobutanoate hydroxymethyltransferase.